We begin with the raw amino-acid sequence, 236 residues long: Methylosome subunit pICln (236 aa).

A disordered region spans residues 1–20 (MSFLKSFPPPGPTEGLRHQQ). Residue Ser2 is modified to N-acetylserine. Ser101, Ser143, Ser192, Ser194, Ser197, and Ser209 each carry phosphoserine. Thr222 is modified (phosphothreonine).

Belongs to the pICln (TC 1.A.47) family. As to quaternary structure, component of the methylosome, a 20S complex containing at least PRMT5/SKB1, WDR77/MEP50 and CLNS1A/pICln. May mediate SNRPD1 and SNRPD3 methylation. Forms a 6S pICln-Sm complex composed of CLNS1A/pICln, SNRPD1, SNRPD2, SNRPE, SNRPF and SNRPG; ring-like structure where CLNS1A/pICln mimics additional Sm proteins and which is unable to assemble into the core snRNP. Interacts with LSM10 and LSM11. As to expression, widely distributed but expressed more abundantly in nonpigmented ciliary epithelial cells than in pigmented ones.

It localises to the cytoplasm. The protein resides in the cytosol. It is found in the nucleus. Its subcellular location is the cytoskeleton. Its function is as follows. Involved in both the assembly of spliceosomal snRNPs and the methylation of Sm proteins. Chaperone that regulates the assembly of spliceosomal U1, U2, U4 and U5 small nuclear ribonucleoproteins (snRNPs), the building blocks of the spliceosome, and thereby plays an important role in the splicing of cellular pre-mRNAs. Most spliceosomal snRNPs contain a common set of Sm proteins SNRPB, SNRPD1, SNRPD2, SNRPD3, SNRPE, SNRPF and SNRPG that assemble in a heptameric protein ring on the Sm site of the small nuclear RNA to form the core snRNP (Sm core). In the cytosol, the Sm proteins SNRPD1, SNRPD2, SNRPE, SNRPF and SNRPG are trapped in an inactive 6S pICln-Sm complex by the chaperone CLNS1A that controls the assembly of the core snRNP. Dissociation by the SMN complex of CLNS1A from the trapped Sm proteins and their transfer to an SMN-Sm complex triggers the assembly of core snRNPs and their transport to the nucleus. The sequence is that of Methylosome subunit pICln (CLNS1A) from Oryctolagus cuniculus (Rabbit).